The sequence spans 204 residues: 8-oxoguanine DNA glycosylase/AP lyase (204 aa).

Active-site residues include Lys-129 and Asp-147.

This sequence belongs to the type-2 OGG1 family.

It carries out the reaction 2'-deoxyribonucleotide-(2'-deoxyribose 5'-phosphate)-2'-deoxyribonucleotide-DNA = a 3'-end 2'-deoxyribonucleotide-(2,3-dehydro-2,3-deoxyribose 5'-phosphate)-DNA + a 5'-end 5'-phospho-2'-deoxyribonucleoside-DNA + H(+). Functionally, catalyzes the excision of an oxidatively damaged form of guanine (7,8-dihydro-8-oxoguanine = 8-oxoG) from DNA. Also cleaves the DNA backbone at apurinic/apyrimidinic sites (AP sites). Prefers oligomers containing 8-oxoG:C, 8-oxoG:T and 8-oxoG:G base pairs, and is less effective on oligomers containing 8-oxoG:A mispairs. In Thermoplasma volcanium (strain ATCC 51530 / DSM 4299 / JCM 9571 / NBRC 15438 / GSS1), this protein is 8-oxoguanine DNA glycosylase/AP lyase.